A 181-amino-acid polypeptide reads, in one-letter code: uncharacterized protein (181 aa).

This is an uncharacterized protein from Methanocaldococcus jannaschii (strain ATCC 43067 / DSM 2661 / JAL-1 / JCM 10045 / NBRC 100440) (Methanococcus jannaschii).